The primary structure comprises 440 residues: tRNA(Ile)-lysidine synthase (440 aa).

29–34 provides a ligand contact to ATP; sequence SGGLDS.

This sequence belongs to the tRNA(Ile)-lysidine synthase family.

The protein resides in the cytoplasm. The catalysed reaction is cytidine(34) in tRNA(Ile2) + L-lysine + ATP = lysidine(34) in tRNA(Ile2) + AMP + diphosphate + H(+). Functionally, ligates lysine onto the cytidine present at position 34 of the AUA codon-specific tRNA(Ile) that contains the anticodon CAU, in an ATP-dependent manner. Cytidine is converted to lysidine, thus changing the amino acid specificity of the tRNA from methionine to isoleucine. The chain is tRNA(Ile)-lysidine synthase from Pectobacterium atrosepticum (strain SCRI 1043 / ATCC BAA-672) (Erwinia carotovora subsp. atroseptica).